Here is a 696-residue protein sequence, read N- to C-terminus: Divalent metal transporter 1 (696 aa).

Residues 1–31 (MHQDNSMRRAINQSRNGGSDSCDINNDREHD) form a disordered region. The Cytoplasmic portion of the chain corresponds to 1–236 (MHQDNSMRRA…RSNRLSFMSK (236 aa)). The segment covering 11–24 (INQSRNGGSDSCDI) has biased composition (polar residues). The helical transmembrane segment at 237 to 255 (LKMYFNYFGPGWIVAIAYL) threads the bilayer. Residues 256–288 (DPGNICGNLNVGLIRSDDFINVNSSVKDYTGYR) are Vacuolar-facing. The N-linked (GlcNAc...) asparagine glycan is linked to Asn278. Residues 289 to 311 (LLWVLVYGHILGFIFHTLSMKLG) traverse the membrane as a helical segment. Residues 312 to 331 (HITGLDLAALCRKEFSSKFS) are Cytoplasmic-facing. Residues 332–357 (YFLYICVQIAIWGAHLQAIIGVFVAI) form a helical membrane-spanning segment. Residues 358–362 (NLILG) are Vacuolar-facing. A helical membrane pass occupies residues 363-382 (IPVKIAILYTLIEAFAYSFL). The Cytoplasmic portion of the chain corresponds to 383 to 393 (ENKSLDLLEKV). Residues 394-416 (LSLLIGILVCCFMFNVFMTPINF) form a helical membrane-spanning segment. Residues 417–435 (QEVASSILYPRIPKGKLLD) are Vacuolar-facing. The chain crosses the membrane as a helical span at residues 436–455 (TMGLLGSVISAHIFYLHSNL). Over 456–475 (TSKKKPVIYNDRMVKRYNKL) the chain is Cytoplasmic. Residues 476-499 (GTIESGGSLLVSCITNCIIVLTFA) form a helical membrane-spanning segment. Over 500–529 (EVNISGDDRKADYNLFNAYDVMKKYFGKTS) the chain is Vacuolar. N-linked (GlcNAc...) asparagine glycosylation is present at Asn502. A helical membrane pass occupies residues 530–546 (MYIWSFGLLSSGNNASF). Residues 547–566 (MCEYASKSVFEGFLNKNVNP) are Cytoplasmic-facing. A helical transmembrane segment spans residues 567–585 (FFRVIFSRIILFIMLYAYV). Residues 586–596 (SYDKYTIDQLS) are Vacuolar-facing. Residues 597–615 (NFINVVQILLLPLAIIPLY) traverse the membrane as a helical segment. The Cytoplasmic segment spans residues 616–634 (RFSIHKNVLGKFAIKGAFK). The chain crosses the membrane as a helical span at residues 635–657 (YLVFVLVISIIVANFLLTLFDFL). Residues 658-662 (QYAPS) lie on the Vacuolar side of the membrane. A helical membrane pass occupies residues 663–684 (NLYVIFIFISSIFYLLFIIYFF). Topologically, residues 685–696 (NMPITKTYYKDS) are cytoplasmic.

This sequence belongs to the NRAMP (TC 2.A.55) family.

The protein resides in the vacuole membrane. The catalysed reaction is Fe(2+)(in) = Fe(2+)(out). In terms of biological role, iron transporter. Required for parasite development during the blood stages. Required for full pathogenicity. The protein is Divalent metal transporter 1 of Plasmodium yoelii.